Consider the following 82-residue polypeptide: Envelope small membrane protein (82 aa).

Over 1–16 (MLPFVQEQIGAFIVNF) the chain is Virion surface. The chain crosses the membrane as a helical span at residues 17-37 (FILSVVCAVTLVVCLAILTAI). At 38–78 (RLCVQCVSGCHTLVFLPAVHIYNTGRAAYVKFQESHPPYPP) the chain is on the intravirion side.

It belongs to the betacoronaviruses E protein family. In terms of assembly, homopentamer. Interacts with membrane protein M in the budding compartment of the host cell, which is located between endoplasmic reticulum and the Golgi complex. Interacts with Nucleoprotein.

The protein resides in the host Golgi apparatus membrane. Plays a central role in virus morphogenesis and assembly. Acts as a viroporin and self-assembles in host membranes forming pentameric protein-lipid pores that allow ion transport. Also plays a role in the induction of apoptosis. The chain is Envelope small membrane protein from Pipistrellus abramus (Japanese pipistrelle).